Reading from the N-terminus, the 556-residue chain is Phosphoenolpyruvate-protein phosphotransferase (556 aa).

The active-site Tele-phosphohistidine intermediate is histidine 186. Phosphoenolpyruvate-binding residues include arginine 288 and arginine 325. Positions 415 and 439 each coordinate Mg(2+). Phosphoenolpyruvate contacts are provided by residues 438–439 (ND) and arginine 449. Cysteine 486 functions as the Proton donor in the catalytic mechanism.

This sequence belongs to the PEP-utilizing enzyme family. As to quaternary structure, homodimer. The cofactor is Mg(2+).

Its subcellular location is the cytoplasm. The enzyme catalyses L-histidyl-[protein] + phosphoenolpyruvate = N(pros)-phospho-L-histidyl-[protein] + pyruvate. Its function is as follows. General (non sugar-specific) component of the phosphoenolpyruvate-dependent sugar phosphotransferase system (sugar PTS). This major carbohydrate active-transport system catalyzes the phosphorylation of incoming sugar substrates concomitantly with their translocation across the cell membrane. Enzyme I transfers the phosphoryl group from phosphoenolpyruvate (PEP) to the phosphoryl carrier protein (HPr). In Streptomyces coelicolor (strain ATCC BAA-471 / A3(2) / M145), this protein is Phosphoenolpyruvate-protein phosphotransferase (ptsI).